Reading from the N-terminus, the 876-residue chain is SED5-binding protein 2 (876 aa).

Position 51 is a phosphoserine (Ser-51). A zinc finger-like region spans residues Cys-164–Cys-189. Residues Val-300–Asn-324 are compositionally biased toward acidic residues. Residues Val-300–Glu-326 are disordered.

Belongs to the SEC23/SEC24 family. SEC24 subfamily. COPII is composed of at least five proteins: the SEC23/24 complex, the SEC13/31 complex and SAR1. Interacts with GRH1.

It is found in the cytoplasm. Its subcellular location is the golgi apparatus membrane. It localises to the endoplasmic reticulum membrane. Functionally, component of the COPII coat, that covers ER-derived vesicles involved in transport from the endoplasmic reticulum to the Golgi apparatus. COPII acts in the cytoplasm to promote the transport of secretory, plasma membrane, and vacuolar proteins from the endoplasmic reticulum to the Golgi complex. This Saccharomyces cerevisiae (strain ATCC 204508 / S288c) (Baker's yeast) protein is SED5-binding protein 2 (SFB2).